Here is a 401-residue protein sequence, read N- to C-terminus: Aspartokinase (401 aa).

It belongs to the aspartokinase family.

It catalyses the reaction L-aspartate + ATP = 4-phospho-L-aspartate + ADP. It participates in amino-acid biosynthesis; L-lysine biosynthesis via DAP pathway; (S)-tetrahydrodipicolinate from L-aspartate: step 1/4. Its pathway is amino-acid biosynthesis; L-methionine biosynthesis via de novo pathway; L-homoserine from L-aspartate: step 1/3. The protein operates within amino-acid biosynthesis; L-threonine biosynthesis; L-threonine from L-aspartate: step 1/5. This chain is Aspartokinase (lysC), found in Rickettsia felis (strain ATCC VR-1525 / URRWXCal2) (Rickettsia azadi).